Consider the following 415-residue polypeptide: 4-hydroxy-3-methylbut-2-en-1-yl diphosphate synthase (flavodoxin) (415 aa).

Residues Cys298, Cys301, Cys344, and Glu351 each coordinate [4Fe-4S] cluster.

This sequence belongs to the IspG family. Requires [4Fe-4S] cluster as cofactor.

It carries out the reaction (2E)-4-hydroxy-3-methylbut-2-enyl diphosphate + oxidized [flavodoxin] + H2O + 2 H(+) = 2-C-methyl-D-erythritol 2,4-cyclic diphosphate + reduced [flavodoxin]. It participates in isoprenoid biosynthesis; isopentenyl diphosphate biosynthesis via DXP pathway; isopentenyl diphosphate from 1-deoxy-D-xylulose 5-phosphate: step 5/6. Functionally, converts 2C-methyl-D-erythritol 2,4-cyclodiphosphate (ME-2,4cPP) into 1-hydroxy-2-methyl-2-(E)-butenyl 4-diphosphate. In Solibacter usitatus (strain Ellin6076), this protein is 4-hydroxy-3-methylbut-2-en-1-yl diphosphate synthase (flavodoxin).